The sequence spans 372 residues: Delta-type opioid receptor (372 aa).

Topologically, residues 1 to 47 (MEPAPSAGAELQPPLFANASDAYPSACPSAGANASGPPGARSASSLA) are extracellular. Residues asparagine 18 and asparagine 33 are each glycosylated (N-linked (GlcNAc...) asparagine). Residues 48 to 75 (LAIAITALYSAVCAVGLLGNVLVMFGIV) form a helical membrane-spanning segment. The Cytoplasmic portion of the chain corresponds to 76-85 (RYTKMKTATN). Residues 86 to 110 (IYIFNLALADALATSTLPFQSAKYL) traverse the membrane as a helical segment. At 111–122 (METWPFGELLCK) the chain is on the extracellular side. A disulfide bridge links cysteine 121 with cysteine 198. The helical transmembrane segment at 123–144 (AVLSIDYYNMFTSIFTLTMMSV) threads the bilayer. Topologically, residues 145–163 (DRYIAVCHPVKALDFRTPA) are cytoplasmic. The chain crosses the membrane as a helical span at residues 164 to 186 (KAKLINICIWVLASGVGVPIMVM). Residues 187–206 (AVTRPRDGAVVCMLQFPSPS) are Extracellular-facing. The chain crosses the membrane as a helical span at residues 207–238 (WYWDTVTKICVFLFAFVVPILIITVCYGLMLL). The Cytoplasmic portion of the chain corresponds to 239–261 (RLRSVRLLSGSKEKDRSLRRITR). A helical membrane pass occupies residues 262–284 (MVLVVVGAFVVCWAPIHIFVIVW). The Extracellular segment spans residues 285 to 299 (TLVDIDRRDPLVVAA). The helical transmembrane segment at 300–321 (LHLCIALGYANSSLNPVLYAFL) threads the bilayer. The Cytoplasmic segment spans residues 322-372 (DENFKRCFRQLCRKPCGRPDPSSFSRAREATARERVTACTPSDGPGGGAAA). Cysteine 333 is lipidated: S-palmitoyl cysteine. The disordered stretch occupies residues 340–372 (PDPSSFSRAREATARERVTACTPSDGPGGGAAA). The span at 347-357 (RAREATARERV) shows a compositional bias: basic and acidic residues.

This sequence belongs to the G-protein coupled receptor 1 family. May form homooligomers. Forms a heterodimer with OPRM1. Interacts with GPRASP1. Interacts with RTP4; the interaction promotes cell surface localization of the OPRD1-OPRM1 heterodimer. Post-translationally, N-glycosylated. In terms of processing, ubiquitinated. A basal ubiquitination seems not to be related to degradation. Ubiquitination is increased upon formation of OPRM1:OPRD1 oligomers leading to proteasomal degradation; the ubiquitination is diminished by RTP4. In terms of tissue distribution, detected in oocytes (at protein level). Detected in brain cortex, hypothalamus, hippocampus and olfactory bulb. Detected in oocytes.

The protein resides in the cell membrane. Its function is as follows. G-protein coupled receptor that functions as a receptor for endogenous enkephalins and for a subset of other opioids. Ligand binding causes a conformation change that triggers signaling via guanine nucleotide-binding proteins (G proteins) and modulates the activity of down-stream effectors, such as adenylate cyclase. Signaling leads to the inhibition of adenylate cyclase activity. Inhibits neurotransmitter release by reducing calcium ion currents and increasing potassium ion conductance. Plays a role in the perception of pain and in opiate-mediated analgesia. Plays a role in developing analgesic tolerance to morphine. In Homo sapiens (Human), this protein is Delta-type opioid receptor (OPRD1).